The following is a 363-amino-acid chain: Trichocyst matrix protein T4-B (363 aa).

Residues Met1–Ala17 form the signal peptide. A propeptide spanning residues Arg18–Gly52 is cleaved from the precursor. Residues Val85–Leu119 are a coiled coil. A propeptide spanning residues Arg190 to Asp221 is cleaved from the precursor. Residues Ala244–Ala352 adopt a coiled-coil conformation.

This sequence belongs to the TMP family. Two components are produced by post-translational processing from the precursor peptide.

Its subcellular location is the trichocyst. In terms of biological role, structural protein that crystallize inside the trichocyst matrix. The sequence is that of Trichocyst matrix protein T4-B (T4B) from Paramecium tetraurelia.